We begin with the raw amino-acid sequence, 156 residues long: Peptidyl-prolyl cis-trans isomerase cypE (156 aa).

The PPIase cyclophilin-type domain maps to threonine 2–alanine 155.

The protein belongs to the cyclophilin-type PPIase family. In terms of assembly, interacts with snwA.

The protein resides in the cytoplasm. The protein localises to the nucleus. The enzyme catalyses [protein]-peptidylproline (omega=180) = [protein]-peptidylproline (omega=0). Catalyzes the cis-trans isomerization of proline imidic peptide bonds in oligopeptides. Plays a role in protein folding, transport and assembly. This is Peptidyl-prolyl cis-trans isomerase cypE (cypE) from Dictyostelium discoideum (Social amoeba).